The primary structure comprises 478 residues: Protein nucleotidyltransferase YdiU (478 aa).

Positions 84, 86, 87, 107, 119, 120, 170, and 177 each coordinate ATP. The Proton acceptor role is filled by D246. 2 residues coordinate Mg(2+): N247 and D256. Residue D256 participates in ATP binding.

It belongs to the SELO family. The cofactor is Mg(2+). Mn(2+) serves as cofactor.

It carries out the reaction L-seryl-[protein] + ATP = 3-O-(5'-adenylyl)-L-seryl-[protein] + diphosphate. The enzyme catalyses L-threonyl-[protein] + ATP = 3-O-(5'-adenylyl)-L-threonyl-[protein] + diphosphate. The catalysed reaction is L-tyrosyl-[protein] + ATP = O-(5'-adenylyl)-L-tyrosyl-[protein] + diphosphate. It catalyses the reaction L-histidyl-[protein] + UTP = N(tele)-(5'-uridylyl)-L-histidyl-[protein] + diphosphate. It carries out the reaction L-seryl-[protein] + UTP = O-(5'-uridylyl)-L-seryl-[protein] + diphosphate. The enzyme catalyses L-tyrosyl-[protein] + UTP = O-(5'-uridylyl)-L-tyrosyl-[protein] + diphosphate. Its function is as follows. Nucleotidyltransferase involved in the post-translational modification of proteins. It can catalyze the addition of adenosine monophosphate (AMP) or uridine monophosphate (UMP) to a protein, resulting in modifications known as AMPylation and UMPylation. The polypeptide is Protein nucleotidyltransferase YdiU (Escherichia coli O7:K1 (strain IAI39 / ExPEC)).